A 606-amino-acid chain; its full sequence is DNA primase (606 aa).

The segment at 40-64 (CPFHQEKTPSFYVVPEKRFYFCHGC) adopts a CHC2-type zinc-finger fold. A Toprim domain is found at 256-349 (KAAVLVEGYF…DPDTFARREG (94 aa)). Positions 262, 307, and 309 each coordinate Mg(2+). The segment at 429 to 451 (VPLPKPAGGDAPPSSPNRPAPPL) is disordered. Pro residues predominate over residues 441-451 (PSSPNRPAPPL).

This sequence belongs to the DnaG primase family. In terms of assembly, monomer. Interacts with DnaB. It depends on Zn(2+) as a cofactor. The cofactor is Mg(2+).

The catalysed reaction is ssDNA + n NTP = ssDNA/pppN(pN)n-1 hybrid + (n-1) diphosphate.. In terms of biological role, RNA polymerase that catalyzes the synthesis of short RNA molecules used as primers for DNA polymerase during DNA replication. This is DNA primase from Myxococcus xanthus.